The sequence spans 517 residues: 2-isopropylmalate synthase (517 aa).

The region spanning 6–267 (IIVFDTTLRD…YTTINTPEIY (262 aa)) is the Pyruvate carboxyltransferase domain. 4 residues coordinate Mn(2+): D15, H201, H203, and N237. Residues 393-517 (DLIGLQISDC…RLSKSSEHQV (125 aa)) form a regulatory domain region.

The protein belongs to the alpha-IPM synthase/homocitrate synthase family. LeuA type 1 subfamily. As to quaternary structure, homodimer. Mn(2+) serves as cofactor.

It is found in the cytoplasm. The enzyme catalyses 3-methyl-2-oxobutanoate + acetyl-CoA + H2O = (2S)-2-isopropylmalate + CoA + H(+). It functions in the pathway amino-acid biosynthesis; L-leucine biosynthesis; L-leucine from 3-methyl-2-oxobutanoate: step 1/4. Functionally, catalyzes the condensation of the acetyl group of acetyl-CoA with 3-methyl-2-oxobutanoate (2-ketoisovalerate) to form 3-carboxy-3-hydroxy-4-methylpentanoate (2-isopropylmalate). In Aliarcobacter butzleri (strain RM4018) (Arcobacter butzleri), this protein is 2-isopropylmalate synthase.